Reading from the N-terminus, the 338-residue chain is MASGLGGLNKSPNGVVIGLAQLALPDPHTREALWMQTQKVVGMVAKARRSNPGMDLIVFPEYSLHGLSMSTAPEIMCSLDGPEVMALREACKTHRIWGCFSIMEANPHGNPFNSGLIVDDLGEIRLYYRKLHPWVPVEPWEPGDLGIPVCDGPRGSKLALIICHDGMFPEMARECAYKGADIMLRTAGYTAPIRHSWKITNQSNAFTNLMQTASVCMCGSDGTFDSMGEAMFVDFDGTIMAEGGGRADEIVCCELRPDLVREARVHWGVENNIYQFGHRGYVAVKGGARDCPYTYMHDLSAGRYRLPWEDDVVHTDGSSCGFAAPERDFKPTPGSWKE.

One can recognise a CN hydrolase domain in the interval 15–257 (VVIGLAQLAL…DEIVCCELRP (243 aa)). Residue Glu61 is the Proton acceptor of the active site. The active-site Proton donor is Lys130. Cys163 (nucleophile) is an active-site residue.

Belongs to the carbon-nitrogen hydrolase superfamily. Aliphatic amidase family.

It catalyses the reaction formamide + H2O = formate + NH4(+). Functionally, is an aliphatic amidase with a restricted substrate specificity, as it only hydrolyzes formamide. This Pseudomonas syringae pv. syringae (strain B728a) protein is Formamidase.